The primary structure comprises 601 residues: HIRA-interacting protein 3 (601 aa).

2 disordered regions span residues Lys60 to Pro469 and Ser546 to Ser601. Residues Gly66 to Lys76 are compositionally biased toward basic and acidic residues. Phosphoserine is present on residues Ser85, Ser96, and Ser98. The span at Glu97 to Ser113 shows a compositional bias: low complexity. A compositionally biased stretch (basic residues) spans Arg117–Lys129. The span at Lys130 to Leu149 shows a compositional bias: basic and acidic residues. Ser134 carries the post-translational modification Phosphoserine. Phosphothreonine is present on residues Thr135 and Thr141. A phosphoserine mark is found at Ser152, Ser153, and Ser163. Phosphothreonine is present on Thr167. A compositionally biased stretch (basic and acidic residues) spans Gly186–Ser205. Residues Ser205, Ser207, Ser208, Ser231, Ser234, Ser238, Ser313, Ser359, Ser360, Ser384, and Ser389 each carry the phosphoserine modification. Basic and acidic residues-rich tracts occupy residues Ser238 to Ser264 and Ser313 to Gly324. Positions Arg347 to Lys378 are enriched in polar residues. Over residues Ser379 to Asp388 the composition is skewed to low complexity. Thr391 carries the phosphothreonine modification. Phosphoserine occurs at positions 396 and 398. Low complexity predominate over residues Ser413 to Ser432. The interval Ser429–Thr572 is interaction with the histone H2A-H2B complex. A compositionally biased stretch (polar residues) spans Trp556–Gly566. Ser564, Ser575, Ser595, Ser596, and Ser600 each carry phosphoserine. The span at Thr568 to Pro580 shows a compositional bias: basic and acidic residues.

Interacts (via C-terminus) with histone H2A-H2B dimers; the interaction is direct. Interacts with HIRA. Interacts with CK2. Phosphorylated by CK2.

It is found in the nucleus. In terms of biological role, histone chaperone that carries a H2A-H2B histone complex and facilitates its deposition onto chromatin. In Mus musculus (Mouse), this protein is HIRA-interacting protein 3.